The following is a 210-amino-acid chain: Methylthioribulose-1-phosphate dehydratase (210 aa).

Residues histidine 94 and histidine 96 each coordinate Zn(2+).

This sequence belongs to the aldolase class II family. MtnB subfamily. The cofactor is Zn(2+).

The catalysed reaction is 5-(methylsulfanyl)-D-ribulose 1-phosphate = 5-methylsulfanyl-2,3-dioxopentyl phosphate + H2O. It participates in amino-acid biosynthesis; L-methionine biosynthesis via salvage pathway; L-methionine from S-methyl-5-thio-alpha-D-ribose 1-phosphate: step 2/6. Functionally, catalyzes the dehydration of methylthioribulose-1-phosphate (MTRu-1-P) into 2,3-diketo-5-methylthiopentyl-1-phosphate (DK-MTP-1-P). The sequence is that of Methylthioribulose-1-phosphate dehydratase from Yersinia enterocolitica serotype O:8 / biotype 1B (strain NCTC 13174 / 8081).